Reading from the N-terminus, the 68-residue chain is UPF0253 protein ASA_2184 (68 aa).

The protein belongs to the UPF0253 family.

This Aeromonas salmonicida (strain A449) protein is UPF0253 protein ASA_2184.